We begin with the raw amino-acid sequence, 100 residues long: Large ribosomal subunit protein uL23 (100 aa).

The protein belongs to the universal ribosomal protein uL23 family. Part of the 50S ribosomal subunit. Contacts protein L29, and trigger factor when it is bound to the ribosome.

One of the early assembly proteins it binds 23S rRNA. One of the proteins that surrounds the polypeptide exit tunnel on the outside of the ribosome. Forms the main docking site for trigger factor binding to the ribosome. The sequence is that of Large ribosomal subunit protein uL23 from Pectobacterium atrosepticum (strain SCRI 1043 / ATCC BAA-672) (Erwinia carotovora subsp. atroseptica).